Consider the following 1330-residue polypeptide: Paired amphipathic helix protein Sin3-like 3 (1330 aa).

PAH domains are found at residues 8–78 (QKLT…LPKG) and 94–164 (KRVE…LPDT). Residues 191–246 (IITPHPDHDYGTEHIDQDRERPIKKENKEHMRGTNKENEHRDARDFEPHSKKEQFL) show a composition bias toward basic and acidic residues. The interval 191–281 (IITPHPDHDY…VPSSSTYDEK (91 aa)) is disordered. Residues 262-277 (ISNQSKLSGAVPSSST) are compositionally biased toward polar residues. The region spanning 283 to 351 (AMKSYSQDLA…DSFIEFLVQC (69 aa)) is the PAH 3 domain. 5 disordered regions span residues 373–401 (GEGK…DRDH), 718–775 (NQNV…GRTS), 789–808 (KNVV…SIER), 882–906 (QEMA…FEED), and 920–1002 (SKAN…EAEC). Residues 383 to 401 (DNDRDQEHKRDDGLRDRDH) show a composition bias toward basic and acidic residues. The segment covering 723–734 (SGSSSAGESEGS) has biased composition (low complexity). Basic and acidic residues predominate over residues 789 to 800 (KNVVTSDEKPES). Over residues 920 to 932 (SKANDSTGNNISG) the composition is skewed to polar residues. Basic and acidic residues-rich tracts occupy residues 933–949 (DRSR…RAEN) and 956–968 (NAAR…RNEY). Over residues 980-989 (GGEDPEDDLD) the composition is skewed to acidic residues. The residue at position 996 (Ser996) is a Phosphoserine.

Interacts with ERF7 and the histone deacetylase HDA19.

It is found in the nucleus. Functionally, acts as a transcriptional repressor. Interacts with ERF7 to repress genes in abscisic acid and drought stress responses. The heterodimer represses transcription by tethering SNL3 to DNA. In Arabidopsis thaliana (Mouse-ear cress), this protein is Paired amphipathic helix protein Sin3-like 3 (SNL3).